A 486-amino-acid polypeptide reads, in one-letter code: Mogroside I-E synthase (486 aa).

Positions 302, 360, 362, 380, 381, 382, 385, 401, and 402 each coordinate UDP-alpha-D-glucose.

The protein belongs to the UDP-glycosyltransferase family. Highly expressed in young fruits 15 days after anthesis (15-DAA).

The enzyme catalyses mogrol + UDP-alpha-D-glucose = mogroside IE + UDP + H(+). It carries out the reaction mogroside I-A1 + UDP-alpha-D-glucose = mogroside IIE + UDP + H(+). The catalysed reaction is mogroside II-A1 + UDP-alpha-D-glucose = mogroside IIIX + UDP + H(+). It catalyses the reaction mogroside II-A + UDP-alpha-D-glucose = mogroside III + UDP + H(+). Its pathway is secondary metabolite biosynthesis; terpenoid biosynthesis. UDP-glycosyltransferase involved in the biosynthesis of cucurbitacin and mogroside tetracyclic triterpene natural products (e.g. siamenoside I and mogrosides IV, V and VI). Cucurbitacins have cytotoxic properties and exhibit deterrent taste as a defense barrier against herbivores. Mogrosides are nonsugar highly oxygenated compounds used as high-intensity zero-calorie sweeteners; they also possess pharmacological properties such as regulating immunity, lowering blood sugar and lipid levels, protecting the liver, and acting as antioxidants and antitumor agents. Catalyzes the C3 primary glucosylation of mogrol, mogroside I-A1, mogroside II-A1 and mogroside II-A. In Siraitia grosvenorii (Monk's fruit), this protein is Mogroside I-E synthase.